A 76-amino-acid polypeptide reads, in one-letter code: Short coiled-coil protein B (76 aa).

Positions 6–52 (ENQVELEEKTRLINQVLELQNTLEDLSARVDAVKEENLKLKSENQVL) form a coiled coil.

Belongs to the SCOC family.

The protein resides in the golgi apparatus membrane. The protein localises to the golgi apparatus. It localises to the trans-Golgi network. Its subcellular location is the cytoplasm. It is found in the cytosol. In terms of biological role, positive regulator of amino acid starvation-induced autophagy. The chain is Short coiled-coil protein B (scocb) from Danio rerio (Zebrafish).